A 486-amino-acid polypeptide reads, in one-letter code: NADH-quinone oxidoreductase subunit N (486 aa).

A run of 14 helical transmembrane segments spans residues phenylalanine 8–valine 28, alanine 38–valine 58, alanine 73–alanine 93, leucine 105–leucine 125, leucine 128–phenylalanine 148, phenylalanine 169–leucine 189, histidine 196–phenylalanine 216, proline 235–leucine 255, leucine 269–alanine 289, isoleucine 304–alanine 324, valine 325–leucine 345, alanine 373–glycine 393, histidine 405–valine 427, and isoleucine 454–leucine 474.

This sequence belongs to the complex I subunit 2 family. NDH-1 is composed of 13 different subunits. Subunits NuoA, H, J, K, L, M, N constitute the membrane sector of the complex.

The protein localises to the cell inner membrane. The catalysed reaction is a quinone + NADH + 5 H(+)(in) = a quinol + NAD(+) + 4 H(+)(out). In terms of biological role, NDH-1 shuttles electrons from NADH, via FMN and iron-sulfur (Fe-S) centers, to quinones in the respiratory chain. The immediate electron acceptor for the enzyme in this species is believed to be ubiquinone. Couples the redox reaction to proton translocation (for every two electrons transferred, four hydrogen ions are translocated across the cytoplasmic membrane), and thus conserves the redox energy in a proton gradient. In Pseudomonas aeruginosa (strain ATCC 15692 / DSM 22644 / CIP 104116 / JCM 14847 / LMG 12228 / 1C / PRS 101 / PAO1), this protein is NADH-quinone oxidoreductase subunit N.